A 177-amino-acid chain; its full sequence is MLIFFKNLSMKRSTWILLFISALVLESTALYFQHGMGLNPCVMCIYERVAILGILFSGLIGCIAPKWLVLRILALLIGLGSAVKGLLLAIKHLDYQINVYPWNQCAMVPDFPQTLPLDKWFPNIFMPSGSCSDITWSFLGFSMVQWIIVIFACYFLFFIILSISQFKKVRKNRMLFR.

The Cytoplasmic segment spans residues 1 to 14; the sequence is MLIFFKNLSMKRST. The chain crosses the membrane as a helical span at residues 15 to 31; the sequence is WILLFISALVLESTALY. The Periplasmic segment spans residues 32–49; the sequence is FQHGMGLNPCVMCIYERV. Cysteine 41 and cysteine 44 are disulfide-bonded. A helical transmembrane segment spans residues 50–65; it reads AILGILFSGLIGCIAP. At 66-72 the chain is on the cytoplasmic side; that stretch reads KWLVLRI. Residues 73-90 traverse the membrane as a helical segment; that stretch reads LALLIGLGSAVKGLLLAI. Topologically, residues 91-145 are periplasmic; sequence KHLDYQINVYPWNQCAMVPDFPQTLPLDKWFPNIFMPSGSCSDITWSFLGFSMVQ. Cysteine 105 and cysteine 131 are disulfide-bonded. A helical membrane pass occupies residues 146 to 164; that stretch reads WIIVIFACYFLFFIILSIS. Residues 165–177 lie on the Cytoplasmic side of the membrane; it reads QFKKVRKNRMLFR.

Belongs to the DsbB family.

Its subcellular location is the cell inner membrane. In terms of biological role, required for disulfide bond formation in some periplasmic proteins. Acts by oxidizing the DsbA protein. The protein is Disulfide bond formation protein B of Histophilus somni (strain 129Pt) (Haemophilus somnus).